Reading from the N-terminus, the 597-residue chain is Blastula protease 10 (597 aa).

Positions 1 to 16 (MKLILFLSGLVSLVLC) are cleaved as a signal peptide. Residues 17 to 93 (TLAAPTGDQK…DEMTGRKKRK (77 aa)) constitute a propeptide, activation peptide. A disordered region spans residues 24–67 (DQKEIHTETPPPKKPSETTTPGALKTPQPEPKDEEPTPGAFQGD). The region spanning 93–294 (KATIYESQRW…ELANLIYECD (202 aa)) is the Peptidase M12A domain. Cystine bridges form between Cys134-Cys293, Cys162-Cys182, Cys299-Cys315, Cys305-Cys317, Cys319-Cys328, Cys339-Cys365, Cys392-Cys412, Cys484-Cys510, and Cys537-Cys557. Residue His190 participates in Zn(2+) binding. Glu191 is an active-site residue. 2 residues coordinate Zn(2+): His194 and His200. Positions 295–329 (DIEDCAGANECLNGGYHDTECNCVCPSGYNGDLCE) constitute an EGF-like domain. CUB domains follow at residues 339–449 (CSER…YRIV) and 484–595 (CGGS…YRAI).

Zn(2+) serves as cofactor.

Its subcellular location is the cytoplasm. It localises to the perinuclear region. The protein localises to the cell cortex. The protein resides in the secreted. It is found in the extracellular space. In terms of biological role, could be involved in the differentiation of ectodermal lineages and subsequent patterning of the embryo. This is Blastula protease 10 (BP10) from Paracentrotus lividus (Common sea urchin).